Here is a 93-residue protein sequence, read N- to C-terminus: Cobalt transport protein CbiN (93 aa).

The next 2 membrane-spanning stretches (helical) occupy residues 5–25 (LILLAMVAALMILPFFINHGG) and 63–83 (LLFTLQGSLGAAVIFYILGYA).

Belongs to the CbiN family. As to quaternary structure, forms an energy-coupling factor (ECF) transporter complex composed of an ATP-binding protein (A component, CbiO), a transmembrane protein (T component, CbiQ) and 2 possible substrate-capture proteins (S components, CbiM and CbiN) of unknown stoichimetry.

It is found in the cell inner membrane. The protein operates within cofactor biosynthesis; adenosylcobalamin biosynthesis. In terms of biological role, part of the energy-coupling factor (ECF) transporter complex CbiMNOQ involved in cobalt import. The protein is Cobalt transport protein CbiN of Klebsiella pneumoniae subsp. pneumoniae (strain ATCC 700721 / MGH 78578).